We begin with the raw amino-acid sequence, 225 residues long: Uridylate kinase (225 aa).

Residue 9-10 coordinates ATP; the sequence is GS. A UMP-binding site is contributed by glycine 43. The ATP site is built by glycine 44 and arginine 48. Residues aspartate 65 and 113 to 119 contribute to the UMP site; that span reads TEPAHST. 3 residues coordinate ATP: threonine 139, tyrosine 145, and aspartate 148.

Belongs to the UMP kinase family. As to quaternary structure, homohexamer.

It is found in the cytoplasm. The enzyme catalyses UMP + ATP = UDP + ADP. It participates in pyrimidine metabolism; CTP biosynthesis via de novo pathway; UDP from UMP (UMPK route): step 1/1. Its activity is regulated as follows. Inhibited by UTP. Its function is as follows. Catalyzes the reversible phosphorylation of UMP to UDP. The protein is Uridylate kinase of Methanobrevibacter smithii (strain ATCC 35061 / DSM 861 / OCM 144 / PS).